A 1166-amino-acid polypeptide reads, in one-letter code: Zinc finger CCHC domain-containing protein 2 (1166 aa).

Disordered regions lie at residues 1-85 (MLRM…GGHA), 205-240 (RAEG…CAKL), 550-668 (SSAD…ARFS), and 904-982 (PASF…ISAV). The segment covering 43–64 (PPPPPTGLPRGPPPPPSPPRGL) has biased composition (pro residues). Positions 65-76 (EPPVASGPTAGA) are enriched in low complexity. Residues 214–223 (EDEPSGDGEQ) show a composition bias toward acidic residues. The span at 572–587 (PQVEKEKVKKTEDRLN) shows a compositional bias: basic and acidic residues. Residues 624–633 (SSESYSSPSS) are compositionally biased toward low complexity. Over residues 634-653 (PRHDGRESLESEEEKDRDSD) the composition is skewed to basic and acidic residues. Over residues 919 to 947 (LPTQNSSALNAATSAQPASTGISPSQSTV) the composition is skewed to polar residues. Over residues 949–963 (PAVPTHTPGPAPSPS) the composition is skewed to pro residues. Over residues 964–982 (PALTHSTAQSDSTSYISAV) the composition is skewed to polar residues. The CCHC-type zinc finger occupies 1119–1136 (VSCYNCGVSGHYAQDCKQ).

In Mus musculus (Mouse), this protein is Zinc finger CCHC domain-containing protein 2 (Zcchc2).